The primary structure comprises 513 residues: OTU domain-containing protein 5-A (513 aa).

Disordered regions lie at residues 1-75 (MTIL…GGAG) and 99-136 (GPGH…DEYE). Residues 166–289 (FIIKQMKEDG…NIHYNSVVNP (124 aa)) form the OTU domain. Residues 171–177 (MKEDGAC) are cys-loop. Asp174 is an active-site residue. Cys177 (nucleophile) is an active-site residue. The variable-loop stretch occupies residues 226–236 (KRKNNCHGNHI). The segment at 277–282 (YHRNIH) is his-loop. Residue His282 is part of the active site. Residues 387-446 (LEEWSGRSPRQRSTAGSPEHPDLHAELCMKPPSPGAPLILGKPPSPCAPGPSNQMSTGAD) form a disordered region.

It belongs to the peptidase C85 family.

It catalyses the reaction Thiol-dependent hydrolysis of ester, thioester, amide, peptide and isopeptide bonds formed by the C-terminal Gly of ubiquitin (a 76-residue protein attached to proteins as an intracellular targeting signal).. Its function is as follows. Deubiquitinating enzyme that may function as negative regulator of the innate immune system. Has peptidase activity towards 'Lys-48'- and 'Lys-63'-linked polyubiquitin chains. Can also cleave 'Lys-11'-linked ubiquitin chains (in vitro). The polypeptide is OTU domain-containing protein 5-A (otud5-a) (Xenopus laevis (African clawed frog)).